We begin with the raw amino-acid sequence, 84 residues long: ATP synthase subunit c (84 aa).

The next 2 membrane-spanning stretches (helical) occupy residues 9-29 (LGLA…GCGI) and 57-77 (ILGL…NLII).

This sequence belongs to the ATPase C chain family. F-type ATPases have 2 components, F(1) - the catalytic core - and F(0) - the membrane proton channel. F(1) has five subunits: alpha(3), beta(3), gamma(1), delta(1), epsilon(1). F(0) has three main subunits: a(1), b(2) and c(10-14). The alpha and beta chains form an alternating ring which encloses part of the gamma chain. F(1) is attached to F(0) by a central stalk formed by the gamma and epsilon chains, while a peripheral stalk is formed by the delta and b chains.

It is found in the cell membrane. Functionally, f(1)F(0) ATP synthase produces ATP from ADP in the presence of a proton or sodium gradient. F-type ATPases consist of two structural domains, F(1) containing the extramembraneous catalytic core and F(0) containing the membrane proton channel, linked together by a central stalk and a peripheral stalk. During catalysis, ATP synthesis in the catalytic domain of F(1) is coupled via a rotary mechanism of the central stalk subunits to proton translocation. In terms of biological role, key component of the F(0) channel; it plays a direct role in translocation across the membrane. A homomeric c-ring of between 10-14 subunits forms the central stalk rotor element with the F(1) delta and epsilon subunits. This is ATP synthase subunit c from Lawsonia intracellularis (strain PHE/MN1-00).